A 248-amino-acid chain; its full sequence is Opiorphin prepropeptide (248 aa).

The signal sequence occupies residues 1-21; sequence MKLTFFLGLLALISCFTPSES. Position 22 is a pyrrolidone carboxylic acid (Q22). The segment at 150–198 is disordered; sequence DTTITTNPPTTATATTSTSTKPTMTISSSTVPISSTPEPATSISAATPA. A glycan (N-linked (GlcNAc...) asparagine) is linked at N218.

It belongs to the PROL1/PROL3 family. Abundantly expressed in lacrimal gland where it found in the secretory endpieces. Also expressed at modest levels in the submandibular gland.

Its subcellular location is the secreted. Functionally, opiorphin is an endogenous inhibitor of neprilysin and aminopeptidase N. Inhibits the breakdown of substance P, Mca-BK2 and Met-enkephalin by neprilysin in vitro with IC(50) values of 29 uM, 33 uM and 33 uM respectively. Inhibits the breakdown of Ala-pNA by aminopeptidase N in vitro with an IC(50) of 65 uM. Has a potent analgesic effect when administered to rats by intravenous injection. This is Opiorphin prepropeptide from Homo sapiens (Human).